A 245-amino-acid polypeptide reads, in one-letter code: MNPKSNPDTIFSAPIDKIGDFTFDERVAEVFPDMIQRSVPGYSNIISAIGMLAERFVKPHSNIYDLGCSLGAATLSMRRHIKQEGCQIIAVDNSPAMVERCKLHVNAYRSDTPVDVVEADIRNIEIENASVVVLNFTLQFLSPEDRYALLEKIYAGLRPGGILILSEKFVFEDEVSNELLIDLHHDFKRANGYSELEISQKRSAIENVMRPDSKKDHKERFAEIGFSSYDVWFQCFNFGSMFAIK.

S-adenosyl-L-methionine-binding positions include Tyr-42, 67 to 69 (GCS), 92 to 93 (DN), 120 to 121 (DI), Asn-135, and Arg-202.

It belongs to the class I-like SAM-binding methyltransferase superfamily. Cx-SAM synthase family. Homodimer.

It carries out the reaction prephenate + S-adenosyl-L-methionine = carboxy-S-adenosyl-L-methionine + 3-phenylpyruvate + H2O. Catalyzes the conversion of S-adenosyl-L-methionine (SAM) to carboxy-S-adenosyl-L-methionine (Cx-SAM). This chain is Carboxy-S-adenosyl-L-methionine synthase, found in Vibrio campbellii (strain ATCC BAA-1116).